Here is a 190-residue protein sequence, read N- to C-terminus: MFTNGASVPLSGSKDMENQQHQVLEQELWQGYKDRGFVVTKFSDLVDSVVRWSRSGSLWPMTFGLACCAVEMMHTAASRYDLDRYGVMFRASPRQADVMIVAGTLTNKMAPALRRVYDQMAEPKYVISMGSCANGGGYYHYSYSVVRGCDRIVPVDIYVPGCPPTAEALLYGILCLQQKIIRGNPGVRGA.

Positions 67, 68, 132, and 162 each coordinate [4Fe-4S] cluster.

Belongs to the complex I 20 kDa subunit family. NDH-1 is composed of 14 different subunits. Subunits NuoB, C, D, E, F, and G constitute the peripheral sector of the complex. The cofactor is [4Fe-4S] cluster.

The protein localises to the cell inner membrane. The catalysed reaction is a quinone + NADH + 5 H(+)(in) = a quinol + NAD(+) + 4 H(+)(out). Its function is as follows. NDH-1 shuttles electrons from NADH, via FMN and iron-sulfur (Fe-S) centers, to quinones in the respiratory chain. The immediate electron acceptor for the enzyme in this species is believed to be ubiquinone. Couples the redox reaction to proton translocation (for every two electrons transferred, four hydrogen ions are translocated across the cytoplasmic membrane), and thus conserves the redox energy in a proton gradient. The chain is NADH-quinone oxidoreductase subunit B from Anaplasma marginale (strain Florida).